The primary structure comprises 172 residues: Disulfide bond formation protein B (172 aa).

The Cytoplasmic portion of the chain corresponds to 1-16 (MNLFASLNQFSKNRIS). The chain crosses the membrane as a helical span at residues 17 to 33 (WLLLLLFVVFFEGAALF). Topologically, residues 34–51 (FQHVMMLSPCVMCIYERV) are periplasmic. Cysteines 43 and 46 form a disulfide. A helical transmembrane segment spans residues 52–67 (AMLGVGGAALFGLIAP). Topologically, residues 68–74 (NNPLVRW) are cytoplasmic. Residues 75–92 (LGLAAWGASAYKGLALSL) traverse the membrane as a helical segment. The Periplasmic portion of the chain corresponds to 93–147 (QHVDYQFNPSPFATCDLFVTFPDWAPLNQWAPWMFEAYGDCSKIVWQFMTLSMPQ). Cysteines 107 and 133 form a disulfide. The helical transmembrane segment at 148-166 (WLVIIFAGNLVALAFIVIA) threads the bilayer. The Cytoplasmic segment spans residues 167 to 172 (QFFKSK).

This sequence belongs to the DsbB family.

The protein localises to the cell inner membrane. Required for disulfide bond formation in some periplasmic proteins. Acts by oxidizing the DsbA protein. The sequence is that of Disulfide bond formation protein B from Vibrio vulnificus (strain CMCP6).